The chain runs to 424 residues: MGPVWLWLWLLVAEVLLPVHCQPFSAHGDKSLGASQPASHQSLEPAPAYHKVTPTITNFALRLYKQLAEEVAGNILFSPVSLSSSLALLSLGAHADTQTQILESLGFNLTETPAADVHRGFQSLLHTLDLPSPKLELKLGHSLFLDRQLKPQQRFLDSAKELYGALAFSANFTEAAATGQQINDLVRKQTYGQVVGCLPEFSHDTLMVLLNYIFFKAKWKHPFDRYQTRKQESFSLDQRTPLRIPMMRQKEMHRFLYDQEASCTVLQIEYSGTALLLLVLPDPGKMQQVEAALQPETLRRWGQRFLPSLLDLHLPRFSISATYNLEEILPLIGLGNLFDMEADLSGIMGQLNKTVSRVSHKAIVDMNEKGTEAAAASGLLSQPPALNMTSAPQAHYNRPFLLLLWEVTTQSLLFLGKVVNPAAG.

Residues 1–21 form the signal peptide; the sequence is MGPVWLWLWLLVAEVLLPVHC. Residues N108, N171, N352, and N387 are each glycosylated (N-linked (GlcNAc...) asparagine).

The protein belongs to the serpin family.

The protein localises to the secreted. The protein is Serpin A11 (Serpina11) of Mus musculus (Mouse).